The chain runs to 727 residues: Elongation factor 2 (727 aa).

The tr-type G domain maps to 19–260 (DQIRNMGICA…MAIKHLPNPL (242 aa)). GTP contacts are provided by residues 28–35 (AHIDHGKT), 94–98 (DTPGH), and 148–151 (NKVD). Residue His-603 is modified to Diphthamide.

The protein belongs to the TRAFAC class translation factor GTPase superfamily. Classic translation factor GTPase family. EF-G/EF-2 subfamily.

The protein localises to the cytoplasm. Its function is as follows. Catalyzes the GTP-dependent ribosomal translocation step during translation elongation. During this step, the ribosome changes from the pre-translocational (PRE) to the post-translocational (POST) state as the newly formed A-site-bound peptidyl-tRNA and P-site-bound deacylated tRNA move to the P and E sites, respectively. Catalyzes the coordinated movement of the two tRNA molecules, the mRNA and conformational changes in the ribosome. The sequence is that of Elongation factor 2 (fusA) from Methanococcus vannielii (strain ATCC 35089 / DSM 1224 / JCM 13029 / OCM 148 / SB).